The primary structure comprises 254 residues: Ribonuclease HII (254 aa).

The 189-residue stretch at 46 to 234 (KLIAGIDEVG…VWMASAPQEV (189 aa)) folds into the RNase H type-2 domain. 3 residues coordinate a divalent metal cation: aspartate 52, glutamate 53, and aspartate 144.

Belongs to the RNase HII family. It depends on Mn(2+) as a cofactor. The cofactor is Mg(2+).

It is found in the cytoplasm. The enzyme catalyses Endonucleolytic cleavage to 5'-phosphomonoester.. Endonuclease that specifically degrades the RNA of RNA-DNA hybrids. In Koribacter versatilis (strain Ellin345), this protein is Ribonuclease HII.